Here is a 341-residue protein sequence, read N- to C-terminus: Methionine import ATP-binding protein MetN 2 (341 aa).

The 240-residue stretch at 2–241 (IELKEVVKEY…PQHTVTKRFV (240 aa)) folds into the ABC transporter domain. 38–45 (GFSGAGKS) serves as a coordination point for ATP.

The protein belongs to the ABC transporter superfamily. Methionine importer (TC 3.A.1.24) family. As to quaternary structure, the complex is composed of two ATP-binding proteins (MetN), two transmembrane proteins (MetI) and a solute-binding protein (MetQ).

Its subcellular location is the cell membrane. The enzyme catalyses L-methionine(out) + ATP + H2O = L-methionine(in) + ADP + phosphate + H(+). The catalysed reaction is D-methionine(out) + ATP + H2O = D-methionine(in) + ADP + phosphate + H(+). Its function is as follows. Part of the ABC transporter complex MetNIQ involved in methionine import. Responsible for energy coupling to the transport system. The polypeptide is Methionine import ATP-binding protein MetN 2 (Staphylococcus aureus (strain USA300)).